Reading from the N-terminus, the 516-residue chain is Glutamyl-tRNA(Gln) amidotransferase subunit B, mitochondrial (516 aa).

The protein belongs to the GatB/GatE family. GatB subfamily. Subunit of the heterotrimeric GatCAB amidotransferase (AdT) complex, composed of A, B and C subunits.

Its subcellular location is the mitochondrion. The enzyme catalyses L-glutamyl-tRNA(Gln) + L-glutamine + ATP + H2O = L-glutaminyl-tRNA(Gln) + L-glutamate + ADP + phosphate + H(+). Its function is as follows. Allows the formation of correctly charged Gln-tRNA(Gln) through the transamidation of misacylated Glu-tRNA(Gln) in the mitochondria. The reaction takes place in the presence of glutamine and ATP through an activated gamma-phospho-Glu-tRNA(Gln). The chain is Glutamyl-tRNA(Gln) amidotransferase subunit B, mitochondrial from Drosophila melanogaster (Fruit fly).